The sequence spans 365 residues: Probable dual-specificity RNA methyltransferase RlmN (365 aa).

Glutamate 99 acts as the Proton acceptor in catalysis. In terms of domain architecture, Radical SAM core spans 105–344; that stretch reads QSYGLSVCVT…CVVRQEHGTD (240 aa). Cysteines 112 and 349 form a disulfide. The [4Fe-4S] cluster site is built by cysteine 119, cysteine 123, and cysteine 126. Residues 171–172, serine 203, 227–229, and asparagine 305 contribute to the S-adenosyl-L-methionine site; these read GE and SLH. The active-site S-methylcysteine intermediate is cysteine 349.

Belongs to the radical SAM superfamily. RlmN family. [4Fe-4S] cluster serves as cofactor.

The protein localises to the cytoplasm. The catalysed reaction is adenosine(2503) in 23S rRNA + 2 reduced [2Fe-2S]-[ferredoxin] + 2 S-adenosyl-L-methionine = 2-methyladenosine(2503) in 23S rRNA + 5'-deoxyadenosine + L-methionine + 2 oxidized [2Fe-2S]-[ferredoxin] + S-adenosyl-L-homocysteine. It carries out the reaction adenosine(37) in tRNA + 2 reduced [2Fe-2S]-[ferredoxin] + 2 S-adenosyl-L-methionine = 2-methyladenosine(37) in tRNA + 5'-deoxyadenosine + L-methionine + 2 oxidized [2Fe-2S]-[ferredoxin] + S-adenosyl-L-homocysteine. Functionally, specifically methylates position 2 of adenine 2503 in 23S rRNA and position 2 of adenine 37 in tRNAs. This Lactococcus lactis subsp. cremoris (strain SK11) protein is Probable dual-specificity RNA methyltransferase RlmN.